Reading from the N-terminus, the 270-residue chain is Glutamate racemase (270 aa).

Residues 14–15 (DS) and 46–47 (YG) each bind substrate. The Proton donor/acceptor role is filled by cysteine 77. 78–79 (NT) is a substrate binding site. The active-site Proton donor/acceptor is the cysteine 189. Residue 190-191 (TH) participates in substrate binding.

Belongs to the aspartate/glutamate racemases family.

It carries out the reaction L-glutamate = D-glutamate. It functions in the pathway cell wall biogenesis; peptidoglycan biosynthesis. Functionally, provides the (R)-glutamate required for cell wall biosynthesis. This chain is Glutamate racemase, found in Neisseria meningitidis serogroup C.